Reading from the N-terminus, the 274-residue chain is Diaminopimelate epimerase (274 aa).

3 residues coordinate substrate: Asn-11, Gln-44, and Asn-64. Cys-73 functions as the Proton donor in the catalytic mechanism. Substrate contacts are provided by residues Gly-74–Asn-75, Asn-157, Asn-190, and Glu-208–Arg-209. Cys-217 serves as the catalytic Proton acceptor. Gly-218–Ser-219 serves as a coordination point for substrate.

It belongs to the diaminopimelate epimerase family. Homodimer.

The protein resides in the cytoplasm. The catalysed reaction is (2S,6S)-2,6-diaminopimelate = meso-2,6-diaminopimelate. Its pathway is amino-acid biosynthesis; L-lysine biosynthesis via DAP pathway; DL-2,6-diaminopimelate from LL-2,6-diaminopimelate: step 1/1. In terms of biological role, catalyzes the stereoinversion of LL-2,6-diaminopimelate (L,L-DAP) to meso-diaminopimelate (meso-DAP), a precursor of L-lysine and an essential component of the bacterial peptidoglycan. The protein is Diaminopimelate epimerase of Photorhabdus laumondii subsp. laumondii (strain DSM 15139 / CIP 105565 / TT01) (Photorhabdus luminescens subsp. laumondii).